We begin with the raw amino-acid sequence, 292 residues long: Beta-lactamase-like protein 2 homolog (292 aa).

Positions 76, 78, 80, 81, 145, 163, and 198 each coordinate Zn(2+).

This sequence belongs to the metallo-beta-lactamase superfamily. Glyoxalase II family.

This Drosophila melanogaster (Fruit fly) protein is Beta-lactamase-like protein 2 homolog.